Reading from the N-terminus, the 50-residue chain is Large ribosomal subunit protein eL39 (50 aa).

Belongs to the eukaryotic ribosomal protein eL39 family.

The polypeptide is Large ribosomal subunit protein eL39 (Methanosphaerula palustris (strain ATCC BAA-1556 / DSM 19958 / E1-9c)).